A 200-amino-acid chain; its full sequence is Snake venom metalloproteinase hemorrhagic factor 2 (200 aa).

One can recognise a Peptidase M12B domain in the interval 4-200; it reads KYIELVVVAD…RKPQCILNKP (197 aa). Glutamate 7 contacts Ca(2+). Asparagine 70 carries an N-linked (GlcNAc...) asparagine glycan. Residue aspartate 91 coordinates Ca(2+). 3 disulfide bridges follow: cysteine 115–cysteine 195, cysteine 155–cysteine 179, and cysteine 157–cysteine 162. Histidine 140 contributes to the Zn(2+) binding site. Glutamate 141 is a catalytic residue. Residues histidine 144 and histidine 150 each coordinate Zn(2+). Positions 195 and 198 each coordinate Ca(2+).

It belongs to the venom metalloproteinase (M12B) family. P-I subfamily. In terms of assembly, monomer. The cofactor is Zn(2+). Expressed by the venom gland.

The protein localises to the secreted. Its function is as follows. Snake venom zinc metalloproteinase that induces weak hemorrhage and mild myonecrosis. Shows mild myotoxicity by killing myocytes. Also induces edema in the mouse footpad at doses where hemorrhage is absent. In vitro, degrades laminin, fibronectin, and type IV collagen, suggesting this toxin play a role in local tissue damage by degrading extracellular matrix, and possibly by degrading muscle extracellular matrix. Hemorrhage is not due to cytotoxicity towards endothelial cells in culture, and may only play a minor role in local bleeding characteristic of L.muta envenomations. Also induces the synthesis of several endogenous matrix metalloproteinases, which in turn, may participate in extracellular matrix degradation. This is Snake venom metalloproteinase hemorrhagic factor 2 from Lachesis muta muta (Bushmaster).